Here is a 660-residue protein sequence, read N- to C-terminus: Long chain acyl-CoA synthetase 1 (660 aa).

Residue 225 to 236 (IMYTSGTSGDPK) participates in ATP binding. Residues 492 to 516 (DGWFHTGDIGEILPNGVLKIIDRKK) are fatty acid-binding.

It belongs to the ATP-dependent AMP-binding enzyme family. Requires Mg(2+) as cofactor. As to expression, epidermal-specific expression along the entire stem. In cauline leaves, was expressed over the entire leaf surface, most strongly in trichomes and guard cells, but not in mesophyll cells. In flowers, the expression was detected in the stigma and filaments of the stamens, and in the carpel was expressed specifically in ovaries. In roots, was expressed in primary and lateral roots, but not in the root tips.

The protein resides in the endoplasmic reticulum. It carries out the reaction a long-chain fatty acid + ATP + CoA = a long-chain fatty acyl-CoA + AMP + diphosphate. It functions in the pathway lipid metabolism; fatty acid metabolism. Functionally, activation of long-chain fatty acids for both synthesis of cellular lipids, and degradation via beta-oxidation. Acts in both the wax and cutin pathways. Preferentially uses palmitate, palmitoleate, linoleate and eicosenoate. Seems to have a specific activity against very long-chain fatty acid (VLCFA) class with acids longer than 24 carbons (C(24)). The sequence is that of Long chain acyl-CoA synthetase 1 (LACS1) from Arabidopsis thaliana (Mouse-ear cress).